The sequence spans 128 residues: MFQAAGAAQATPSHEAKGGGSSSTVQRSKSFSLRAQVKETCAACQKTVYPMERLVADKLIFHSSCFCCKHCHTKLSLGSYAALHGEFYCKPHFQQLFKSKGNYDEGFGRKQHKELWAHKEVDPGTKTA.

Position 1 is an N-acetylmethionine (Met-1). The disordered stretch occupies residues 1–25 (MFQAAGAAQATPSHEAKGGGSSSTV). Residues 39–99 (ETCAACQKTV…KPHFQQLFKS (61 aa)) enclose the LIM zinc-binding domain. 8 residues coordinate Zn(2+): Cys-41, Cys-44, His-62, Cys-65, Cys-68, Cys-71, Cys-89, and His-92.

Interacts with ILK.

It is found in the cytoplasm. The protein resides in the nucleus. Its function is as follows. Acts as an activator of the protein-kinase ILK, thereby regulating cell motility. The protein is LIM domain-containing protein 2 (LIMD2) of Bos taurus (Bovine).